We begin with the raw amino-acid sequence, 274 residues long: Diaminopimelate epimerase (274 aa).

The substrate site is built by Asn-11, Gln-44, and Asn-64. Cys-73 (proton donor) is an active-site residue. Residues 74–75, Asn-157, Asn-190, and 208–209 each bind substrate; these read GN and ER. Cys-217 acts as the Proton acceptor in catalysis. 218–219 is a substrate binding site; the sequence is GS.

This sequence belongs to the diaminopimelate epimerase family. In terms of assembly, homodimer.

The protein resides in the cytoplasm. It catalyses the reaction (2S,6S)-2,6-diaminopimelate = meso-2,6-diaminopimelate. Its pathway is amino-acid biosynthesis; L-lysine biosynthesis via DAP pathway; DL-2,6-diaminopimelate from LL-2,6-diaminopimelate: step 1/1. In terms of biological role, catalyzes the stereoinversion of LL-2,6-diaminopimelate (L,L-DAP) to meso-diaminopimelate (meso-DAP), a precursor of L-lysine and an essential component of the bacterial peptidoglycan. The protein is Diaminopimelate epimerase of Escherichia fergusonii (strain ATCC 35469 / DSM 13698 / CCUG 18766 / IAM 14443 / JCM 21226 / LMG 7866 / NBRC 102419 / NCTC 12128 / CDC 0568-73).